The primary structure comprises 1322 residues: Transcription elongation factor SPT6-like (1322 aa).

Over residues M1–N17 the composition is skewed to basic and acidic residues. 2 disordered regions span residues M1–E65 and K90–H113. The span at R18–D33 shows a compositional bias: acidic residues. Over residues E48–E65 the composition is skewed to basic and acidic residues. Positions E97–D110 are enriched in acidic residues. The S1 motif domain occupies G1017 to K1088.

This sequence belongs to the SPT6 family.

It localises to the nucleus. Transcription elongation factor that enhances the transcription elongation by RNA polymerase II (RNAPII). This chain is Transcription elongation factor SPT6-like, found in Arabidopsis thaliana (Mouse-ear cress).